Here is a 138-residue protein sequence, read N- to C-terminus: ATP synthase epsilon chain (138 aa).

Belongs to the ATPase epsilon chain family. In terms of assembly, F-type ATPases have 2 components, CF(1) - the catalytic core - and CF(0) - the membrane proton channel. CF(1) has five subunits: alpha(3), beta(3), gamma(1), delta(1), epsilon(1). CF(0) has three main subunits: a, b and c.

It localises to the cellular thylakoid membrane. Functionally, produces ATP from ADP in the presence of a proton gradient across the membrane. The chain is ATP synthase epsilon chain from Microcystis aeruginosa (strain NIES-843 / IAM M-2473).